The sequence spans 240 residues: Large ribosomal subunit protein bL25 (240 aa).

The segment at 1–24 (MATVMEFKATARPKSGKGAARAER) is disordered.

Belongs to the bacterial ribosomal protein bL25 family. CTC subfamily. In terms of assembly, part of the 50S ribosomal subunit; part of the 5S rRNA/L5/L18/L25 subcomplex. Contacts the 5S rRNA. Binds to the 5S rRNA independently of L5 and L18.

This is one of the proteins that binds to the 5S RNA in the ribosome where it forms part of the central protuberance. The polypeptide is Large ribosomal subunit protein bL25 (Rhodopseudomonas palustris (strain HaA2)).